A 288-amino-acid polypeptide reads, in one-letter code: MSELRLMAVHAHPDDESSKGAATTARYAAEGARVMVVTLTGGERGDILNPAMDLPEVHGRIAEVRRDEMAKAAEILGVEHHWLGFVDSGLPEGDPLPPLPDGCFALVPLEEPVKRLVRVIREFRPHVMTTYDENGGYPHPDHIRCHQVSVAAYEAAADHLLYPDAGEPWAVQKLYYNHGFLRQRMQLLQEEFAKNGQEGPFAKWLEHWDPDNDVFANRVTTRVHCAEYFHQRDDALRAHATQIDPKGDFFHAPIEWQQRLWPTEEFELARARVPVTLPEDDLFKGVEP.

The Zn(2+) site is built by His12, Asp15, and His142.

It belongs to the MshB deacetylase family. Mca subfamily. As to quaternary structure, monomer. Requires Zn(2+) as cofactor.

It catalyses the reaction mycothiol S-conjugate + H2O = an N-acetyl-L-cysteine-S-conjugate + 1D-myo-inositol 2-amino-2-deoxy-alpha-D-glucopyranoside. With respect to regulation, partially inhibited by MSH when MSmB (a bimane derivative of MSH) is used as substrate. Its function is as follows. A mycothiol (MSH, N-acetyl-cysteinyl-glucosaminyl-inositol) S-conjugate amidase, it recycles conjugated MSH to the N-acetyl cysteine conjugate and the MSH precursor. Involved in MSH-dependent detoxification of a number of alkylating agents and antibiotics. Activity is specific for the mycothiol moiety. The sequence is that of Mycothiol S-conjugate amidase from Mycolicibacterium smegmatis (strain ATCC 700084 / mc(2)155) (Mycobacterium smegmatis).